The following is a 158-amino-acid chain: Anaerobic nitrite reductase AHB2 (158 aa).

One can recognise a Globin domain in the interval Gly5–Lys154. Residues Glu38–Ala42 carry the Homodimerization motif. Heme b-binding residues include Ser48, Lys62, His66, and His101. Residues Asp108–Arg120 carry the Homodimerization motif.

This sequence belongs to the plant globin family. In terms of assembly, unable to dimerize. Heme b is required as a cofactor. In terms of tissue distribution, expressed in rosette leaves but not in roots.

The protein resides in the cytoplasm. It localises to the nucleus. The catalysed reaction is Fe(III)-heme b-[protein] + nitric oxide + H2O = Fe(II)-heme b-[protein] + nitrite + 2 H(+). Its function is as follows. Phytoglobin that reduces nitrite to nitric oxide (NO) under anoxic conditions (e.g. during flooding or in waterlogged soil). May not function as an oxygen storage or transport protein. Has an unusually high affinity for O(2) through an hexacoordinate heme iron because of a very low dissociation constant. This chain is Anaerobic nitrite reductase AHB2, found in Arabidopsis thaliana (Mouse-ear cress).